Here is a 950-residue protein sequence, read N- to C-terminus: MVRYNPNEIEPRWQAYWDEHHTFATPEKVGKKKRYVLDMFPYPSGDGLHVGHPEGYTATDIVSRFARARGESVLHPMGFDAFGLPAEEHAIKTGEHPRVQTQRNIDNFTRQLKMLGFSYDWDRVLATTDEEYFRWTQWIFGVLYDTWFDHDQQKGRPISELPIPAEVTAEGELEIEQYRDSKRLAYLDDALVNWCPKLGTVLANEEVVDGKSEVGGHPVKRIPLRQWMLRITDYAERLLDGLDDLDWPTGIKKLQSDWIGRSTGGEVDFYLQRGAAGDDTGPFVAFKRARESEGFPTDPGKDCLRVYTTRPDTLFGATYMVVAPEHPLIDVLVKPEQKDEVDAYREKASFKSDRERTDGDRAKTGVFTGSYAINPADGRSIPIWVADYVLAGYGTGAIMAVPAHDERDFEFAVAFDLPVIPVVDPPADHKQREEILAGKACFAAEGVAINSGEYDGKTTAEVKAALTAELAKQGLACEAVNYKLRDWLFSRQRFWGEPFPVLHEIDSEGNATGVRRLVPDDQLPVTLPELADFKPHGRPEPPLAKADDDWLIVELDGKRYRRETNTMPQWAGSCWYYLRYIDPKNSDALIDPQKEKDWMPVDLYVGGAEHAVLHLLYSRFWHKVLFDRGHVTCPEPFGKLVNQGMILGEVEFTSFVDPSGKHVSTKDVKKDAEGNRVHKATGEQVEIVSLTEEQVVKKGEGFVLASDASIKVDSRAFKMSKSRGNVVNPDSVVRDYGADSLRLYEMFMGPLEATKPWAMNGVGGVRSFLDRVWRMIIDEPEDELKVSDAVVDTACDEEQLRVLHQTIRKVTEDNEAMSFNTAIAKMMEFTNHFTRCETRPREAMESFLILLAPYAPHMCEELWKHLGHNESISLQPWPKWDEAALVQSSIEIPVQINGKVKAKISLSPDAKPNEMGEAALADPAVQNAIGDKKVVKTIAVPGRMVNLVVK.

The short motif at 41–52 (PYPSGDGLHVGH) is the 'HIGH' region element. The short motif at 718 to 722 (KMSKS) is the 'KMSKS' region element. K721 provides a ligand contact to ATP.

Belongs to the class-I aminoacyl-tRNA synthetase family.

It is found in the cytoplasm. It carries out the reaction tRNA(Leu) + L-leucine + ATP = L-leucyl-tRNA(Leu) + AMP + diphosphate. This Rhodopirellula baltica (strain DSM 10527 / NCIMB 13988 / SH1) protein is Leucine--tRNA ligase.